The chain runs to 61 residues: Bowman-Birk type proteinase inhibitor (61 aa).

7 cysteine pairs are disulfide-bonded: Cys4/Cys57, Cys5/Cys20, Cys8/Cys53, Cys10/Cys18, Cys27/Cys34, Cys31/Cys46, and Cys36/Cys44.

It belongs to the Bowman-Birk serine protease inhibitor family.

In terms of biological role, strong inhibitor of trypsin with a 1:1 stoichiometry. Weaker inhibitor of chymotrypsin. In Erythrina variegata (Indian coral tree), this protein is Bowman-Birk type proteinase inhibitor.